A 249-amino-acid chain; its full sequence is Probable transcriptional regulator ycf27 (249 aa).

The Response regulatory domain maps to 13-126 (HLLIVDDENN…ELEARIQSIL (114 aa)). Asp-62 carries the 4-aspartylphosphate modification. The H-T-H motif DNA-binding region spans 82 to 100 (DIPIIMLTALEDVLDKVTG). The ompR/PhoB-type DNA-binding region spans 142–246 (INLFKTGSLN…ARGTGYLCRK (105 aa)).

It localises to the plastid. The protein localises to the chloroplast. In terms of biological role, probable promoter-specific protein mediating the interaction between DNA and RNA polymerase. The sequence is that of Probable transcriptional regulator ycf27 (ycf27) from Cyanidium caldarium (Red alga).